Reading from the N-terminus, the 341-residue chain is Ribosomal RNA small subunit methyltransferase H (341 aa).

S-adenosyl-L-methionine contacts are provided by residues 47 to 49 (GGY), Asp64, Phe91, Asp109, and Gln116. Residues 292-319 (VAASEEEASRNPRARSAKLRAGVRTEAP) form a disordered region.

It belongs to the methyltransferase superfamily. RsmH family.

The protein resides in the cytoplasm. It carries out the reaction cytidine(1402) in 16S rRNA + S-adenosyl-L-methionine = N(4)-methylcytidine(1402) in 16S rRNA + S-adenosyl-L-homocysteine + H(+). Functionally, specifically methylates the N4 position of cytidine in position 1402 (C1402) of 16S rRNA. This Rhizobium meliloti (strain 1021) (Ensifer meliloti) protein is Ribosomal RNA small subunit methyltransferase H.